The sequence spans 250 residues: Leucyl/phenylalanyl-tRNA--protein transferase (250 aa).

The protein belongs to the L/F-transferase family.

It is found in the cytoplasm. It catalyses the reaction N-terminal L-lysyl-[protein] + L-leucyl-tRNA(Leu) = N-terminal L-leucyl-L-lysyl-[protein] + tRNA(Leu) + H(+). The catalysed reaction is N-terminal L-arginyl-[protein] + L-leucyl-tRNA(Leu) = N-terminal L-leucyl-L-arginyl-[protein] + tRNA(Leu) + H(+). The enzyme catalyses L-phenylalanyl-tRNA(Phe) + an N-terminal L-alpha-aminoacyl-[protein] = an N-terminal L-phenylalanyl-L-alpha-aminoacyl-[protein] + tRNA(Phe). In terms of biological role, functions in the N-end rule pathway of protein degradation where it conjugates Leu, Phe and, less efficiently, Met from aminoacyl-tRNAs to the N-termini of proteins containing an N-terminal arginine or lysine. The sequence is that of Leucyl/phenylalanyl-tRNA--protein transferase from Cupriavidus necator (strain ATCC 17699 / DSM 428 / KCTC 22496 / NCIMB 10442 / H16 / Stanier 337) (Ralstonia eutropha).